The sequence spans 106 residues: Integration host factor subunit alpha (106 aa).

This sequence belongs to the bacterial histone-like protein family. As to quaternary structure, heterodimer of an alpha and a beta chain.

Its function is as follows. This protein is one of the two subunits of integration host factor, a specific DNA-binding protein that functions in genetic recombination as well as in transcriptional and translational control. The protein is Integration host factor subunit alpha of Paramagnetospirillum magneticum (strain ATCC 700264 / AMB-1) (Magnetospirillum magneticum).